The sequence spans 396 residues: MMKTLSLQSRAKTTALKQPKEIFAFARDIDGEFVYDQKIVKDENVSYYYLPDSKIDGSIDLQAGYAKFKKIPEEKNMSDMKCLLTALTKYEQEHNNGEKVNVDIITYRGLMTKLLALPYNLNDPVDLNVLAYDGQLFINSDEEIELARRKEEDEHKQQSMTPEKYDHMKRCEFSGYKFEAIATLPKPWADCSRQQIDKRGKKMVNNYEQYISVIKTGIGEAKMLLAGEVDCVWDYIPEDGKDVLSHYMELKTTRILESNGQVVNFEKKLFKTWAQCFLMGIRKVVYGFRDDSFFLRDVELYKTEEIPLLIKNNALTENKSGGKINCTTALKWYGAVIEWLLQEIPRDDTSKAYRVSFDPSTRTFTLRELMGNENSRLRNGEMLTSEFKQWRESIQK.

Substrate is bound at residue 107–109 (YRG). A divalent metal cation is bound at residue glutamate 179. Position 228 (glutamate 228) interacts with substrate. A divalent metal cation-binding residues include aspartate 230, glutamate 249, and leucine 250. 2 residues coordinate substrate: lysine 251 and glutamine 275.

Belongs to the DXO/Dom3Z family. As to quaternary structure, interacts with RAT1; the interaction is direct, stabilizes RAT1 protein structure and stimulates its exoribonuclease activity. The interaction also stimulates RAI1 pyrophosphohydrolase activity, probably by recruiting it to mRNA substrates. A divalent metal cation is required as a cofactor.

It localises to the nucleus. The catalysed reaction is a 5'-end NAD(+)-phospho-ribonucleoside in mRNA + H2O = a 5'-end phospho-ribonucleoside in mRNA + NAD(+) + H(+). The enzyme catalyses a 5'-end (N(7)-methyl 5'-triphosphoguanosine)-ribonucleoside-ribonucleotide in mRNA + H2O = a (N(7)-methyl 5'-triphosphoguanosine)-nucleoside + a 5'-end phospho-ribonucleoside in mRNA + H(+). It carries out the reaction a 5'-end triphospho-ribonucleoside in mRNA + H2O = a 5'-end phospho-ribonucleoside in mRNA + diphosphate + H(+). Functionally, decapping enzyme for NAD-capped RNAs: specifically hydrolyzes the nicotinamide adenine dinucleotide (NAD) cap from a subset of RNAs by removing the entire NAD moiety from the 5'-end of an NAD-capped RNA. The NAD-cap is present at the 5'-end of some RNAs and snoRNAs. In contrast to the canonical 5'-end N7 methylguanosine (m7G) cap, the NAD cap promotes mRNA decay. Also acts as a non-canonical decapping enzyme that removes the entire cap structure of m7G capped or incompletely capped RNAs. Has decapping activity toward incomplete 5'-end m7G cap mRNAs such as unmethylated 5'-end-capped RNA (cap0), while it has no activity toward 2'-O-ribose methylated m7G cap (cap1). Also possesses RNA 5'-pyrophosphohydrolase activity by hydrolyzing the 5'-end triphosphate to release pyrophosphates. Stimulates exoribonuclease activity of Rat1, allowing it to degrade RNAs with stable secondary structure more effectively. This is Decapping nuclease RAI1 from Scheffersomyces stipitis (strain ATCC 58785 / CBS 6054 / NBRC 10063 / NRRL Y-11545) (Yeast).